Consider the following 58-residue polypeptide: Small ribosomal subunit protein bS21 (58 aa).

Residues 24–58 form a disordered region; it reads TKAGTLQEARKREHYEKPSVKRKRKSEAARKRKKI. A compositionally biased stretch (basic and acidic residues) spans 31–42; sequence EARKREHYEKPS. Positions 43–58 are enriched in basic residues; the sequence is VKRKRKSEAARKRKKI.

The protein belongs to the bacterial ribosomal protein bS21 family.

The sequence is that of Small ribosomal subunit protein bS21 from Streptococcus thermophilus (strain CNRZ 1066).